A 101-amino-acid chain; its full sequence is uncharacterized protein (101 aa).

Residues 1–11 (MSDEGYRELVE) are compositionally biased toward basic and acidic residues. The disordered stretch occupies residues 1-26 (MSDEGYRELVESKSAPTTPGPWSPDR).

This is an uncharacterized protein from Torque teno canis virus (isolate Cf-TTV10).